The sequence spans 127 residues: Transcription antitermination protein NusB (127 aa).

It belongs to the NusB family.

Involved in transcription antitermination. Required for transcription of ribosomal RNA (rRNA) genes. Binds specifically to the boxA antiterminator sequence of the ribosomal RNA (rrn) operons. The chain is Transcription antitermination protein NusB from Lysinibacillus sphaericus (strain C3-41).